A 414-amino-acid chain; its full sequence is tRNA methyltransferase 10 homolog C (414 aa).

A mitochondrion-targeting transit peptide spans 1–35 (MNVTVRFLRPFARYLVPYTFHRTRSNSYSRVLQRY). Position 79 is a phosphoserine (S79). The stretch at 133 to 162 (GKEMMKKAKQMKKEMKAAAREEAKRARSLE) forms a coiled coil. Residues 186 to 378 (LGWKGVQAMQ…KFVPRRKHTG (193 aa)) form the SAM-dependent MTase TRM10-type domain.

It belongs to the class IV-like SAM-binding methyltransferase superfamily. TRM10 family. Component of mitochondrial ribonuclease P, a complex composed of TRMT10C/MRPP1, HSD17B10/MRPP2 and PRORP/MRPP3. Interacts with HSD17B10/MRPP2; forming the MRPP1-MRPP2 subcomplex of the mitochondrial ribonuclease P complex. Interacts with GRSF1.

Its subcellular location is the mitochondrion matrix. It localises to the mitochondrion nucleoid. The enzyme catalyses adenosine(9) in tRNA + S-adenosyl-L-methionine = N(1)-methyladenosine(9) in tRNA + S-adenosyl-L-homocysteine + H(+). It carries out the reaction guanosine(9) in tRNA + S-adenosyl-L-methionine = N(1)-methylguanosine(9) in tRNA + S-adenosyl-L-homocysteine + H(+). It catalyses the reaction an adenosine in mRNA + S-adenosyl-L-methionine = an N(1)-methyladenosine in mRNA + S-adenosyl-L-homocysteine + H(+). Functionally, mitochondrial tRNA N(1)-methyltransferase involved in mitochondrial tRNA maturation. Component of mitochondrial ribonuclease P, a complex composed of TRMT10C/MRPP1, HSD17B10/MRPP2 and PRORP/MRPP3, which cleaves tRNA molecules in their 5'-ends. Together with HSD17B10/MRPP2, forms a subcomplex of the mitochondrial ribonuclease P, named MRPP1-MRPP2 subcomplex, which displays functions that are independent of the ribonuclease P activity. The MRPP1-MRPP2 subcomplex catalyzes the formation of N(1)-methylguanine and N(1)-methyladenine at position 9 (m1G9 and m1A9, respectively) in tRNAs; TRMT10C/MRPP1 acting as the catalytic N(1)-methyltransferase subunit. The MRPP1-MRPP2 subcomplex also acts as a tRNA maturation platform: following 5'-end cleavage by the mitochondrial ribonuclease P complex, the MRPP1-MRPP2 subcomplex enhances the efficiency of 3'-processing catalyzed by ELAC2, retains the tRNA product after ELAC2 processing and presents the nascent tRNA to the mitochondrial CCA tRNA nucleotidyltransferase TRNT1 enzyme. In addition to tRNA N(1)-methyltransferase activity, TRMT10C/MRPP1 also acts as a mRNA N(1)-methyltransferase by mediating methylation of adenosine residues at the N(1) position of MT-ND5 mRNA. Associates with mitochondrial DNA complexes at the nucleoids to initiate RNA processing and ribosome assembly. This Rattus norvegicus (Rat) protein is tRNA methyltransferase 10 homolog C.